We begin with the raw amino-acid sequence, 1230 residues long: DNA-directed RNA polymerase, mitochondrial (1230 aa).

The transit peptide at 1–41 (MSALCWGRGAAGLKRALRPCGRPGLPGKEGTAGGVCGPRRS) directs the protein to the mitochondrion. Disordered stretches follow at residues 18–55 (RPCG…DRRK), 95–115 (GSGD…KDAT), and 731–750 (VPAP…PHSA). Pro residues predominate over residues 732–744 (PAPPSEAPQPPEA). The segment at 802–1230 (FRGRTYPCPP…QVKRSTYFFS (429 aa)) is mediates interaction with TEFM. Active-site residues include Asp922, Lys991, and Asp1151.

The protein belongs to the phage and mitochondrial RNA polymerase family. Homodimer. Component of the mitochondrial transcription initiation complex, composed at least of TFB2M, TFAM and POLRMT. In this complex TFAM recruits POLRMT to the promoter whereas TFB2M induces structural changes in POLRMT to enable promoter opening and trapping of the DNA non-template strand. Upon metabolic stress, forms a complex composed of FOXO3, SIRT3 and mitochondrial RNA polymerase POLRMT; the complex is recruited to mtDNA in a SIRT3-dependent manner. Also forms a complex composed of FOXO3, SIRT3, TFAM and POLRMT. Interacts with TFB1M and TFB2M, leading to the stimulation of transcription. Interacts with TEFM. Interacts with MTRES1.

It localises to the mitochondrion. It catalyses the reaction RNA(n) + a ribonucleoside 5'-triphosphate = RNA(n+1) + diphosphate. Functionally, DNA-dependent RNA polymerase catalyzes the transcription of mitochondrial DNA into RNA using the four ribonucleoside triphosphates as substrates. Component of the mitochondrial transcription initiation complex, composed at least of TFB2M, TFAM and POLRMT that is required for basal transcription of mitochondrial DNA. In this complex, TFAM recruits POLRMT to a specific promoter whereas TFB2M induces structural changes in POLRMT to enable promoter opening and trapping of the DNA non-template strand. Has DNA primase activity. Catalyzes the synthesis of short RNA primers that are necessary for the initiation of lagging-strand DNA synthesis from the origin of light-strand DNA replication (OriL). This Homo sapiens (Human) protein is DNA-directed RNA polymerase, mitochondrial.